Reading from the N-terminus, the 753-residue chain is Putative cyclic nucleotide-gated ion channel 8 (753 aa).

Over 1-111 (MYKSQYISGH…DKTLLLWNRM (111 aa)) the chain is Cytoplasmic. The helical transmembrane segment at 112–132 (FVISCILAVSVDPLFFYLPIV) threads the bilayer. Residues 133-145 (DNSKNCIGIDSKL) are Extracellular-facing. Residues 146–166 (AVTTTTLRTIIDVFYLTRMAL) form a helical membrane-spanning segment. At 167–199 (QFRTAYIAPSSRVFGRGELVIDPAKIAERYLTR) the chain is on the cytoplasmic side. The chain crosses the membrane as a helical span at residues 200–220 (YFIVDFLAVLPLPQIAVWKFL). Over 221-233 (HGSKGTDVLPTKQ) the chain is Extracellular. Residues 234 to 254 (ALLHIVITQYIPRFVRFIPLT) form a helical membrane-spanning segment. At 255-274 (SELKKTAGAFAEGAWAGAAY) the chain is on the cytoplasmic side. The helical transmembrane segment at 275 to 295 (YLLWYMLASHITGAFWYMLSV) threads the bilayer. The Extracellular portion of the chain corresponds to 296-402 (ERNDTCLRSA…QGLQTSTYPG (107 aa)). Residues 403–423 (EVLFSIAIAVAGLLLFALLIG) form a helical membrane-spanning segment. The Cytoplasmic segment spans residues 424–753 (NMQTYLQSLT…FEALDTDDLN (330 aa)). Residues 508–638 (LFAN…TFRF) and Glu579 each bind a nucleoside 3',5'-cyclic phosphate. The segment at 624-639 (FRRLHSRQVQQTFRFY) is calmodulin-binding. The IQ domain occupies 644 to 673 (RTWAACFIQAAWRRHLRRKIAELRRKEEEE). A disordered region spans residues 731–753 (KSLMNLTKPSEPDFEALDTDDLN). The segment covering 742 to 753 (PDFEALDTDDLN) has biased composition (acidic residues).

The protein belongs to the cyclic nucleotide-gated cation channel (TC 1.A.1.5) family. In terms of assembly, homotetramer or heterotetramer.

The protein localises to the cell membrane. Putative cyclic nucleotide-gated ion channel. This chain is Putative cyclic nucleotide-gated ion channel 8 (CNGC8), found in Arabidopsis thaliana (Mouse-ear cress).